The chain runs to 440 residues: Xylose isomerase (440 aa).

Residues H101 and D104 contribute to the active site. Mg(2+) contacts are provided by E232, E268, H271, D296, D307, D309, and D339.

It belongs to the xylose isomerase family. In terms of assembly, homotetramer. The cofactor is Mg(2+).

Its subcellular location is the cytoplasm. It carries out the reaction alpha-D-xylose = alpha-D-xylulofuranose. The protein is Xylose isomerase of Enterobacter sp. (strain 638).